A 131-amino-acid chain; its full sequence is Small ribosomal subunit protein uS8c (131 aa).

This sequence belongs to the universal ribosomal protein uS8 family. Part of the 30S ribosomal subunit.

It is found in the plastid. It localises to the chloroplast. Functionally, one of the primary rRNA binding proteins, it binds directly to 16S rRNA central domain where it helps coordinate assembly of the platform of the 30S subunit. In Phalaenopsis aphrodite subsp. formosana (Moth orchid), this protein is Small ribosomal subunit protein uS8c (rps8).